Here is a 340-residue protein sequence, read N- to C-terminus: L-threonine 3-dehydrogenase (340 aa).

Cys38 is a Zn(2+) binding site. Residues Thr40 and His43 each act as charge relay system in the active site. Positions 63, 64, 93, 96, 99, and 107 each coordinate Zn(2+). Residues Ile175, Asp195, Arg200, 261-263 (LGI), and 285-286 (IY) contribute to the NAD(+) site.

This sequence belongs to the zinc-containing alcohol dehydrogenase family. In terms of assembly, homotetramer. Zn(2+) serves as cofactor.

It localises to the cytoplasm. It catalyses the reaction L-threonine + NAD(+) = (2S)-2-amino-3-oxobutanoate + NADH + H(+). The protein operates within amino-acid degradation; L-threonine degradation via oxydo-reductase pathway; glycine from L-threonine: step 1/2. Functionally, catalyzes the NAD(+)-dependent oxidation of L-threonine to 2-amino-3-ketobutyrate. In Stenotrophomonas maltophilia (strain K279a), this protein is L-threonine 3-dehydrogenase.